A 398-amino-acid chain; its full sequence is Immunoglobulin heavy constant alpha 1 (398 aa).

Residues 1 to 364 lie on the Extracellular side of the membrane; sequence ASPTSPKVFP…TPGANLWPTT (364 aa). One can recognise an Ig-like 1 domain in the interval 6–98; sequence PKVFPLSLCS…HYTNPSQDVT (93 aa). 2 disulfides stabilise this stretch: Cys-26–Cys-85 and Cys-77–Cys-101. A disordered region spans residues 96-122; it reads DVTVPCPVPSTPPTPSPSTPPTPSPSC. Positions 101-119 are enriched in pro residues; the sequence is CPVPSTPPTPSPSTPPTPS. O-linked (GalNAc...) serine glycosylation is present at Ser-105. O-linked (GalNAc...) threonine glycans are attached at residues Thr-106 and Thr-109. Residues Ser-111 and Ser-113 are each glycosylated (O-linked (GalNAc...) serine). 2 O-linked (GalNAc...) threonine glycosylation sites follow: Thr-114 and Thr-117. 2 O-linked (GalNAc...) serine glycosylation sites follow: Ser-119 and Ser-121. 3 cysteine pairs are disulfide-bonded: Cys-123–Cys-180, Cys-147–Cys-204, and Cys-250–Cys-313. Ig-like domains are found at residues 125–220 and 228–330; these read PRLS…ATLS and PEVH…KTID. Asn-144 carries an N-linked (GlcNAc...) (complex) asparagine glycan. N-linked (GlcNAc...) (complex) asparagine glycosylation occurs at Pro-340. Residue Glu-352 coordinates 3-hydroxy-L-kynurenine. The helical transmembrane segment at 365–383 threads the bilayer; the sequence is ITFLTLFLLSLFYSTALTV. The Cytoplasmic portion of the chain corresponds to 384–398; that stretch reads TSVRGPSGNREGPQY.

In terms of assembly, immunoglobulins are composed of two identical heavy chains and two identical light chains; disulfide-linked. Monomeric or polymeric. Part of the secretory IgA (sIgA) complex that consists of two, four or five IgA monomers, and two additional non-Ig polypeptides, namely the JCHAIN and the secretory component (the proteolytic product of PIGR). In terms of processing, 3-Hydroxykynurenine, an oxidized tryptophan metabolite that is common in biological fluids, reacts with alpha-1-microglobulin to form heterogeneous polycyclic chromophores including hydroxanthommatin. The chromophore reacts with accessible cysteines forming non-reducible thioether cross-links with Ig alpha-1 chain C region Cys-352. Post-translationally, N- and O-glycosylated. N-glycan at Asn-144: Hex5HexNAc4.

It is found in the secreted. The protein localises to the cell membrane. In terms of biological role, constant region of immunoglobulin heavy chains. Immunoglobulins, also known as antibodies, are membrane-bound or secreted glycoproteins produced by B lymphocytes. In the recognition phase of humoral immunity, the membrane-bound immunoglobulins serve as receptors which, upon binding of a specific antigen, trigger the clonal expansion and differentiation of B lymphocytes into immunoglobulins-secreting plasma cells. Secreted immunoglobulins mediate the effector phase of humoral immunity, which results in the elimination of bound antigens. The antigen binding site is formed by the variable domain of one heavy chain, together with that of its associated light chain. Thus, each immunoglobulin has two antigen binding sites with remarkable affinity for a particular antigen. The variable domains are assembled by a process called V-(D)-J rearrangement and can then be subjected to somatic hypermutations which, after exposure to antigen and selection, allow affinity maturation for a particular antigen. Ig alpha is the major immunoglobulin class in body secretions. This Homo sapiens (Human) protein is Immunoglobulin heavy constant alpha 1.